A 154-amino-acid polypeptide reads, in one-letter code: Host transcription reprogramming factor 5 (154 aa).

A signal peptide spans methionine 1 to alanine 19. The segment at threonine 24 to arginine 85 is disordered. Over residues glutamine 35–aspartate 50 the composition is skewed to polar residues. Basic and acidic residues predominate over residues glutamate 69–arginine 85. The C2H2-type; degenerate zinc finger occupies tyrosine 96–histidine 121.

It localises to the secreted. The protein localises to the host nucleus. Functionally, probable secreted effector that translocates into the nuclei of host cells to reprogram the expression of targeted genes by binding on effector binding elements in rice. This chain is Host transcription reprogramming factor 5, found in Pyricularia oryzae (strain 70-15 / ATCC MYA-4617 / FGSC 8958) (Rice blast fungus).